The following is a 758-amino-acid chain: Phosphoribosylformylglycinamidine synthase subunit PurL (758 aa).

The active site involves His57. ATP is bound by residues Tyr60 and Arg104. Glu106 is a Mg(2+) binding site. Substrate is bound by residues 107-110 and Arg129; that span reads SHNH. Catalysis depends on His108, which acts as the Proton acceptor. Asp130 contributes to the Mg(2+) binding site. Gln254 contributes to the substrate binding site. Residue Asp282 participates in Mg(2+) binding. 326-328 serves as a coordination point for substrate; sequence ESQ. ATP contacts are provided by Asn509 and Gly546. Asn547 contributes to the Mg(2+) binding site. Ser549 is a substrate binding site.

Belongs to the FGAMS family. Monomer. Part of the FGAM synthase complex composed of 1 PurL, 1 PurQ and 2 PurS subunits.

The protein localises to the cytoplasm. The catalysed reaction is N(2)-formyl-N(1)-(5-phospho-beta-D-ribosyl)glycinamide + L-glutamine + ATP + H2O = 2-formamido-N(1)-(5-O-phospho-beta-D-ribosyl)acetamidine + L-glutamate + ADP + phosphate + H(+). It participates in purine metabolism; IMP biosynthesis via de novo pathway; 5-amino-1-(5-phospho-D-ribosyl)imidazole from N(2)-formyl-N(1)-(5-phospho-D-ribosyl)glycinamide: step 1/2. In terms of biological role, part of the phosphoribosylformylglycinamidine synthase complex involved in the purines biosynthetic pathway. Catalyzes the ATP-dependent conversion of formylglycinamide ribonucleotide (FGAR) and glutamine to yield formylglycinamidine ribonucleotide (FGAM) and glutamate. The FGAM synthase complex is composed of three subunits. PurQ produces an ammonia molecule by converting glutamine to glutamate. PurL transfers the ammonia molecule to FGAR to form FGAM in an ATP-dependent manner. PurS interacts with PurQ and PurL and is thought to assist in the transfer of the ammonia molecule from PurQ to PurL. The sequence is that of Phosphoribosylformylglycinamidine synthase subunit PurL from Corynebacterium ammoniagenes (Brevibacterium ammoniagenes).